Reading from the N-terminus, the 301-residue chain is MKRVAVLLGGISEEREVSLASGRQVAAALRKAGYDVFEIEVGADLGAVIAALTPAPDAVFNALHGRFGEDGTIQGVLDYMGIPYTHSGVRASSMAMDKGAAKAVFAAAGLPLAQHRIVPLDELAEADPLPRPYVIKPVNEGSSVGVFILREGDNRRADIARAWRHGSVAMTEEYVPGRELTVSVLEDRALAVTEIRAEGFYDYTAKYAAGASRHEIPADVPPSVSARARDVAVAAHRALGCRGATRSDFRYDDETDRLVLLEVNTQPGMTPTSLLPEQAAHCGIDFPALCAWMVENAACRV.

An ATP-grasp domain is found at 102 to 295; that stretch reads KAVFAAAGLP…FPALCAWMVE (194 aa). Residue 128–181 coordinates ATP; the sequence is PLPRPYVIKPVNEGSSVGVFILREGDNRRADIARAWRHGSVAMTEEYVPGRELT. Residues D248, E262, and N264 each coordinate Mg(2+).

The protein belongs to the D-alanine--D-alanine ligase family. It depends on Mg(2+) as a cofactor. The cofactor is Mn(2+).

It localises to the cytoplasm. The enzyme catalyses 2 D-alanine + ATP = D-alanyl-D-alanine + ADP + phosphate + H(+). It participates in cell wall biogenesis; peptidoglycan biosynthesis. Functionally, cell wall formation. The chain is D-alanine--D-alanine ligase from Acidiphilium cryptum (strain JF-5).